A 1474-amino-acid polypeptide reads, in one-letter code: Alpha-2-macroglobulin (1474 aa).

The N-terminal stretch at 1–23 (MGKNKLLHPSLVLLLLVLLPTDA) is a signal peptide. A disulfide bridge links cysteine 48 with cysteine 86. The N-linked (GlcNAc...) (complex) asparagine glycan is linked to asparagine 55. Residues asparagine 70 and asparagine 247 are each glycosylated (N-linked (GlcNAc...) asparagine). Disulfide bonds link cysteine 251–cysteine 299 and cysteine 269–cysteine 287. N-linked (GlcNAc...) asparagine glycosylation is found at asparagine 396 and asparagine 410. Cystine bridges form between cysteine 470–cysteine 563, cysteine 595–cysteine 771, cysteine 642–cysteine 689, cysteine 821–cysteine 849, cysteine 847–cysteine 883, cysteine 921–cysteine 1321, cysteine 1079–cysteine 1127, and cysteine 1352–cysteine 1467. The interval 690-728 (PQLQQYEMHGPEGLRVGFYESDVMGRGHARLVHVEEPHT) is bait region. Isoglutamyl lysine isopeptide (Gln-Lys) (interchain with K-? in other proteins) cross-links involve residues glutamine 693 and glutamine 694. Inhibitory regions lie at residues 704–709 (RVGFYE), 719–723 (RLVHV), and 730–735 (TVRKYF). Residue asparagine 869 is glycosylated (N-linked (GlcNAc...) asparagine). Residues 972–975 (CGEQ) constitute a cross-link (isoglutamyl cysteine thioester (Cys-Gln)). Asparagine 991 carries an N-linked (GlcNAc...) asparagine glycan. Asparagine 1424 is a glycosylation site (N-linked (GlcNAc...) (complex) asparagine).

It belongs to the protease inhibitor I39 (alpha-2-macroglobulin) family. In terms of assembly, homotetramer; disulfide-linked. In terms of tissue distribution, secreted in plasma.

It localises to the secreted. Is able to inhibit all four classes of proteinases by a unique 'trapping' mechanism. This protein has a peptide stretch, called the 'bait region' which contains specific cleavage sites for different proteinases. When a proteinase cleaves the bait region, a conformational change is induced in the protein which traps the proteinase. The entrapped enzyme remains active against low molecular weight substrates (activity against high molecular weight substrates is greatly reduced). Following cleavage in the bait region, a thioester bond is hydrolyzed and mediates the covalent binding of the protein to the proteinase. This is Alpha-2-macroglobulin (A2M) from Homo sapiens (Human).